A 54-amino-acid chain; its full sequence is Toxin AnmTx Cj 1c-1 (54 aa).

Residues 1–7 (MLNKRGV) form the signal peptide. Intrachain disulfides connect Cys-9–Cys-50, Cys-11–Cys-41, and Cys-33–Cys-51. Glu-53 is modified (glutamic acid 1-amide).

The protein belongs to the sea anemone sodium channel inhibitory toxin family. Type I subfamily. Contains 3 disulfide bonds.

It is found in the secreted. It localises to the nematocyst. Its function is as follows. In vivo, induces marked paralysis on shrimps (C.multidentata) at 10-20 seconds after injection and a weak toxicity when injected into insect larvae (M.domestica). The chain is Toxin AnmTx Cj 1c-1 from Epiactis japonica (Sea anemone).